A 475-amino-acid chain; its full sequence is Trifunctional enzyme subunit beta, mitochondrial (475 aa).

The transit peptide at 1–34 directs the protein to the mitochondrion; it reads MTTILTCPFKKLPTTSKWALRFAIRPLSCSSQLR. An N6-acetyllysine; alternate modification is found at Lys-73. Lys-73 is modified (N6-succinyllysine; alternate). Cys-139 acts as the Acyl-thioester intermediate in catalysis. The stretch at 174–221 is an intramembrane region; that stretch reads IRHSRKMRKLMLDLNKAKSMGQRLSLISKFRLNFLAPELPAVAEFSTS. Lys-189 is modified (N6-acetyllysine; alternate). Lys-189 is subject to N6-succinyllysine; alternate. 3 positions are modified to N6-succinyllysine: Lys-191, Lys-273, and Lys-292. At Lys-294 the chain carries N6-acetyllysine; alternate. Residue Lys-294 is modified to N6-succinyllysine; alternate. Lys-299 is modified (N6-acetyllysine). Position 333 is an N6-acetyllysine; alternate (Lys-333). Lys-333 bears the N6-succinyllysine; alternate mark. Residues Lys-349 and Lys-362 each carry the N6-acetyllysine modification. Cys-459 functions as the Proton donor/acceptor in the catalytic mechanism.

The protein belongs to the thiolase-like superfamily. Thiolase family. Heterotetramer of 2 alpha/HADHA and 2 beta/HADHB subunits; forms the mitochondrial trifunctional enzyme. Also purified as higher order heterooligomers including a 4 alpha/HADHA and 4 beta/HADHB heterooligomer which physiological significance remains unclear. The mitochondrial trifunctional enzyme interacts with MTLN. Interacts with RSAD2/viperin.

The protein resides in the mitochondrion. Its subcellular location is the mitochondrion inner membrane. The protein localises to the mitochondrion outer membrane. It localises to the endoplasmic reticulum. It catalyses the reaction an acyl-CoA + acetyl-CoA = a 3-oxoacyl-CoA + CoA. The catalysed reaction is butanoyl-CoA + acetyl-CoA = 3-oxohexanoyl-CoA + CoA. The enzyme catalyses hexanoyl-CoA + acetyl-CoA = 3-oxooctanoyl-CoA + CoA. It carries out the reaction octanoyl-CoA + acetyl-CoA = 3-oxodecanoyl-CoA + CoA. It catalyses the reaction decanoyl-CoA + acetyl-CoA = 3-oxododecanoyl-CoA + CoA. The catalysed reaction is dodecanoyl-CoA + acetyl-CoA = 3-oxotetradecanoyl-CoA + CoA. The enzyme catalyses tetradecanoyl-CoA + acetyl-CoA = 3-oxohexadecanoyl-CoA + CoA. It functions in the pathway lipid metabolism; fatty acid beta-oxidation. Mitochondrial trifunctional enzyme catalyzes the last three of the four reactions of the mitochondrial beta-oxidation pathway. The mitochondrial beta-oxidation pathway is the major energy-producing process in tissues and is performed through four consecutive reactions breaking down fatty acids into acetyl-CoA. Among the enzymes involved in this pathway, the trifunctional enzyme exhibits specificity for long-chain fatty acids. Mitochondrial trifunctional enzyme is a heterotetrameric complex composed of two proteins, the trifunctional enzyme subunit alpha/HADHA carries the 2,3-enoyl-CoA hydratase and the 3-hydroxyacyl-CoA dehydrogenase activities, while the trifunctional enzyme subunit beta/HADHB described here bears the 3-ketoacyl-CoA thiolase activity. This chain is Trifunctional enzyme subunit beta, mitochondrial (HADHB), found in Macaca fascicularis (Crab-eating macaque).